The sequence spans 73 residues: UPF0346 protein SAS1364 (73 aa).

This sequence belongs to the UPF0346 family.

In Staphylococcus aureus (strain MSSA476), this protein is UPF0346 protein SAS1364.